Here is a 635-residue protein sequence, read N- to C-terminus: Biosynthetic arginine decarboxylase (635 aa).

K101 is subject to N6-(pyridoxal phosphate)lysine. 284 to 294 (VDVGGGLGVDY) contacts substrate.

The protein belongs to the Orn/Lys/Arg decarboxylase class-II family. SpeA subfamily. Mg(2+) is required as a cofactor. Pyridoxal 5'-phosphate serves as cofactor.

It catalyses the reaction L-arginine + H(+) = agmatine + CO2. The protein operates within amine and polyamine biosynthesis; agmatine biosynthesis; agmatine from L-arginine: step 1/1. Its function is as follows. Catalyzes the biosynthesis of agmatine from arginine. In Tolumonas auensis (strain DSM 9187 / NBRC 110442 / TA 4), this protein is Biosynthetic arginine decarboxylase.